Consider the following 476-residue polypeptide: Nitrosuccinate lyase (476 aa).

The fumarate site is built by Arg137, Arg140, and Arg201. The active-site Proton acceptor is the Ser302. 2 residues coordinate fumarate: Lys308 and Asn310. The active-site Proton donor is the Arg341.

The protein belongs to the class-II fumarase/aspartase family. As to quaternary structure, homotetramer.

It catalyses the reaction 2-nitrobutanedioate = fumarate + nitrite + H(+). Its pathway is antibiotic biosynthesis. Functionally, part of a gene cluster involved in the biosynthesis of cremeomycin, a light-sensitive o-diazoquinone with antibacterial and antiproliferative effects. Catalyzes the formation of nitrous acid from nitrosuccinic acid (2-nitrobutanedioate) by elimination of its nitro group. This Streptomyces cremeus protein is Nitrosuccinate lyase.